A 467-amino-acid polypeptide reads, in one-letter code: H(+)/Cl(-) exchange transporter ClcA (467 aa).

The Cytoplasmic segment spans residues 1–30; it reads MTKRERIIQSVLVKVPKDAINQFLSHGSTP. Residues 31–67 traverse the membrane as a helical segment; sequence ISVLFLAALVGVLAGLVGTYFEIAVHFVSETRTEWLK. At 68–74 the chain is on the periplasmic side; that stretch reads SEIGHLL. A helical transmembrane segment spans residues 75-98; the sequence is PLWLAAILISAALAFVGYFLVHRF. Residues 104-108 carry the Selectivity filter part_1 motif; it reads GSGIP. Chloride is bound at residue serine 105. The helical intramembrane region spans 107–114; sequence IPEIEGAM. Over 115–121 the chain is Cytoplasmic; sequence DNIRPVR. Transmembrane regions (helical) follow at residues 122-139 and 146-164; these read WWRV…ALGS and EGPT…TDIF. Residues 144–148 carry the Selectivity filter part_2 motif; it reads GREGP. Residues 165 to 174 lie on the Cytoplasmic side of the membrane; that stretch reads RVKDDDTRHS. 2 intramembrane regions (helical) span residues 175–187 and 191–199; these read LLAS…LAAA and PLAGIMFVV. At 200 to 212 the chain is on the cytoplasmic side; sequence EEMRPQFRYSLIS. A helical transmembrane segment spans residues 213–230; that stretch reads IRAVIISAVMANIVFRAI. Over 231–250 the chain is Periplasmic; sequence NGQDAVITMPQYQPPELKAL. The helical transmembrane segment at 251 to 279 threads the bilayer; the sequence is WLFLLLGGLFGVFGVLFNKLVTVAQDAFV. Residues 280 to 285 are Cytoplasmic-facing; sequence ALHKND. The chain crosses the membrane as a helical span at residues 286–307; sequence RKRYLITGTCLGGIFGLLLLYV. The Periplasmic portion of the chain corresponds to 308–327; it reads PELTGGGIHLIPDVTNGNYS. 2 helical membrane-spanning segments follow: residues 328-347 and 353-374; these read VSLL…ICFG and GIFA…ATAK. The Selectivity filter part_3 signature appears at 353–357; the sequence is GIFAP. Chloride is bound by residues isoleucine 354 and phenylalanine 355. The Periplasmic segment spans residues 375–384; it reads ILLPDLPIEP. The helical intramembrane region spans 385 to 399; that stretch reads GMFAIAGMGALFAAT. The note=Loop between two helices intramembrane region spans 400–402; the sequence is VRA. The helical intramembrane region spans 403–414; the sequence is PITGILLVIEMT. The note=Loop between two helices intramembrane region spans 415-419; it reads NNYYL. A helical transmembrane segment spans residues 420-436; sequence ILPLIITSLGAVICAQI. Topologically, residues 437-467 are cytoplasmic; the sequence is CGGKPIYSQLLHRTIKNDKLRQQDLPEQQNS. A chloride-binding site is contributed by tyrosine 443.

The protein belongs to the chloride channel (TC 2.A.49) family. ClcA subfamily. In terms of assembly, homodimer.

Its subcellular location is the cell inner membrane. It catalyses the reaction 2 chloride(in) + H(+)(out) = 2 chloride(out) + H(+)(in). Functionally, proton-coupled chloride transporter. Functions as antiport system and exchanges two chloride ions for 1 proton. Probably acts as an electrical shunt for an outwardly-directed proton pump that is linked to amino acid decarboxylation, as part of the extreme acid resistance (XAR) response. The protein is H(+)/Cl(-) exchange transporter ClcA of Vibrio vulnificus (strain CMCP6).